The chain runs to 153 residues: uncharacterized protein (153 aa).

The interval 16-40 (DEQTPLLNNDGIQRTPPSAEADMSL) is disordered. A compositionally biased stretch (polar residues) spans 20-31 (PLLNNDGIQRTP).

This is an uncharacterized protein from Schizosaccharomyces pombe (strain 972 / ATCC 24843) (Fission yeast).